A 137-amino-acid chain; its full sequence is Large ribosomal subunit protein uL16 (137 aa).

Belongs to the universal ribosomal protein uL16 family. Part of the 50S ribosomal subunit.

In terms of biological role, binds 23S rRNA and is also seen to make contacts with the A and possibly P site tRNAs. The sequence is that of Large ribosomal subunit protein uL16 from Psychrobacter sp. (strain PRwf-1).